The chain runs to 61 residues: Bacteriocin leucocin-A (61 aa).

The propeptide occupies 1–24; sequence MMNMKPTESYEQLDNSALEQVVGG. A disulfide bridge connects residues Cys33 and Cys38.

This sequence belongs to the bacteriocin class IIA/YGNGV family.

The protein localises to the secreted. In terms of biological role, inhibits a wide spectrum of lactic acid bacteria. The chain is Bacteriocin leucocin-A (lcnA) from Leuconostoc gelidum.